Reading from the N-terminus, the 359-residue chain is B-cell differentiation antigen CD72 (359 aa).

Over 1–95 the chain is Cytoplasmic; sequence MAEAITYADL…LPCRTTCLRY (95 aa). A phosphotyrosine; by LYN mark is found at Tyr-7 and Tyr-39. Residues 96-116 form a helical; Signal-anchor for type II membrane protein membrane-spanning segment; sequence LLLGLLLTCLLLGVTAICLGV. Residues 117–359 are Extracellular-facing; it reads RYLQVSQQLQ…CEMTAFRFPD (243 aa). The N-linked (GlcNAc...) asparagine glycan is linked to Asn-136. Positions 232–352 constitute a C-type lectin domain; the sequence is CCPSGWIMHQ…RSSLPYICEM (121 aa). Disulfide bonds link Cys-233-Cys-244, Cys-261-Cys-350, and Cys-325-Cys-342.

In terms of assembly, homodimer; disulfide-linked. Associates with CD5. Interacts (tyrosine phosphorylated) with PTPN6/SHP-1. In terms of processing, phosphorylated upon engagement of the B-cell receptor, probably by LYN or SYK. Phosphorylation at Tyr-7 is important for interaction with PTPN6/SHP-1. In terms of tissue distribution, pre-B-cells and B-cells but not terminally differentiated plasma cells.

The protein localises to the membrane. Functionally, co-receptor of B cell receptor (BCR) that plays both positive and negative roles on B-cell functions. Recognizes the Sm/ribonucleoprotein (RNP) self-antigen ligand, and coligation of CD72 and BCR inhibits BCR signaling. Mechanistically, ligand binding leads to the recruitment of PTPN6/SHP-1 to the BCR complex which is inhibitory to BCR signaling. Also acts as a ligand for CD5 and thereby plays a critical role in maintaining regulatory T and B-cell homeostasis. This Homo sapiens (Human) protein is B-cell differentiation antigen CD72 (CD72).